Reading from the N-terminus, the 278-residue chain is Indole-3-glycerol phosphate synthase (278 aa).

This sequence belongs to the TrpC family.

It carries out the reaction 1-(2-carboxyphenylamino)-1-deoxy-D-ribulose 5-phosphate + H(+) = (1S,2R)-1-C-(indol-3-yl)glycerol 3-phosphate + CO2 + H2O. Its pathway is amino-acid biosynthesis; L-tryptophan biosynthesis; L-tryptophan from chorismate: step 4/5. The polypeptide is Indole-3-glycerol phosphate synthase (Pseudomonas fluorescens (strain ATCC BAA-477 / NRRL B-23932 / Pf-5)).